The sequence spans 168 residues: Cilia- and flagella-associated protein HOATZ (168 aa).

The disordered stretch occupies residues proline 142–glutamate 168.

Belongs to the HOATZ family. As to expression, specifically expressed in tissues with motile cilia and flagella, such as brain ependyma, lung, testis, and oviduct but not in whole brain, liver,kidney, spleen, and eyeball.

Its subcellular location is the cytoplasm. It localises to the cell projection. The protein localises to the cilium. Required for motile ciliogenesis and flagellar genesis by mediating the maturation of the glycolytic enzyme ENO4. This Mus musculus (Mouse) protein is Cilia- and flagella-associated protein HOATZ.